The primary structure comprises 311 residues: Tryptophan 2,3-dioxygenase (311 aa).

The interval 1–37 (MQPPGGDAPAGCPFSGARAAQPAQAAHEAPHVPGEAD) is disordered. The span at 17–27 (ARAAQPAQAAH) shows a compositional bias: low complexity. Substrate is bound by residues 80–84 (FIIQH), Tyr-142, and Arg-146. His-269 contacts heme. A substrate-binding site is contributed by Thr-283.

Belongs to the tryptophan 2,3-dioxygenase family. In terms of assembly, homotetramer. Heme is required as a cofactor.

It carries out the reaction L-tryptophan + O2 = N-formyl-L-kynurenine. It functions in the pathway amino-acid degradation; L-tryptophan degradation via kynurenine pathway; L-kynurenine from L-tryptophan: step 1/2. Functionally, heme-dependent dioxygenase that catalyzes the oxidative cleavage of the L-tryptophan (L-Trp) pyrrole ring and converts L-tryptophan to N-formyl-L-kynurenine. Catalyzes the oxidative cleavage of the indole moiety. The chain is Tryptophan 2,3-dioxygenase from Burkholderia cenocepacia (strain ATCC BAA-245 / DSM 16553 / LMG 16656 / NCTC 13227 / J2315 / CF5610) (Burkholderia cepacia (strain J2315)).